The sequence spans 118 residues: Aspartate 1-decarboxylase 1 (118 aa).

The active-site Schiff-base intermediate with substrate; via pyruvic acid is the S25. Pyruvic acid (Ser) is present on S25. T57 contributes to the substrate binding site. Y58 functions as the Proton donor in the catalytic mechanism. Residue G73–A75 participates in substrate binding.

This sequence belongs to the PanD family. In terms of assembly, heterooctamer of four alpha and four beta subunits. Pyruvate is required as a cofactor. Is synthesized initially as an inactive proenzyme, which is activated by self-cleavage at a specific serine bond to produce a beta-subunit with a hydroxyl group at its C-terminus and an alpha-subunit with a pyruvoyl group at its N-terminus.

It localises to the cytoplasm. The enzyme catalyses L-aspartate + H(+) = beta-alanine + CO2. The protein operates within cofactor biosynthesis; (R)-pantothenate biosynthesis; beta-alanine from L-aspartate: step 1/1. Functionally, catalyzes the pyruvoyl-dependent decarboxylation of aspartate to produce beta-alanine. The polypeptide is Aspartate 1-decarboxylase 1 (Gloeobacter violaceus (strain ATCC 29082 / PCC 7421)).